The primary structure comprises 143 residues: Large ribosomal subunit protein uL11 (143 aa).

It belongs to the universal ribosomal protein uL11 family. In terms of assembly, part of the ribosomal stalk of the 50S ribosomal subunit. Interacts with L10 and the large rRNA to form the base of the stalk. L10 forms an elongated spine to which L12 dimers bind in a sequential fashion forming a multimeric L10(L12)X complex. In terms of processing, one or more lysine residues are methylated.

In terms of biological role, forms part of the ribosomal stalk which helps the ribosome interact with GTP-bound translation factors. In Nitrosospira multiformis (strain ATCC 25196 / NCIMB 11849 / C 71), this protein is Large ribosomal subunit protein uL11.